Consider the following 170-residue polypeptide: uncharacterized protein (170 aa).

The signal sequence occupies residues 1 to 28 (MTGGVMSQKFVVGAGLLVCSVCSLSAMA).

The protein belongs to the fimbrial protein family.

Part of the yfcOPQRSUV fimbrial operon. Could contribute to adhesion to various surfaces in specific environmental niches. Increases adhesion to eukaryotic T24 bladder epithelial cells in the absence of fim genes. This is an uncharacterized protein from Escherichia coli (strain K12).